The chain runs to 277 residues: Large ribosomal subunit protein uL2 (277 aa).

Disordered regions lie at residues 37–60 and 223–265; these read KNSTAGRNNNGHITTRHKGGGHKH and VVMN…KRTD. A compositionally biased stretch (polar residues) spans 39–49; the sequence is STAGRNNNGHI. The segment covering 50–60 has biased composition (basic residues); sequence TTRHKGGGHKH. A compositionally biased stretch (basic and acidic residues) spans 229–244; sequence DHPHGGGEGRTGEARE.

The protein belongs to the universal ribosomal protein uL2 family. In terms of assembly, part of the 50S ribosomal subunit. Forms a bridge to the 30S subunit in the 70S ribosome.

In terms of biological role, one of the primary rRNA binding proteins. Required for association of the 30S and 50S subunits to form the 70S ribosome, for tRNA binding and peptide bond formation. It has been suggested to have peptidyltransferase activity; this is somewhat controversial. Makes several contacts with the 16S rRNA in the 70S ribosome. The chain is Large ribosomal subunit protein uL2 from Neisseria meningitidis serogroup A / serotype 4A (strain DSM 15465 / Z2491).